Consider the following 426-residue polypeptide: Serine hydroxymethyltransferase (426 aa).

(6S)-5,6,7,8-tetrahydrofolate-binding positions include Leu-113 and 117-119 (GHL). At Lys-222 the chain carries N6-(pyridoxal phosphate)lysine. 363-365 (SAF) lines the (6S)-5,6,7,8-tetrahydrofolate pocket.

This sequence belongs to the SHMT family. In terms of assembly, homodimer. Requires pyridoxal 5'-phosphate as cofactor.

It localises to the cytoplasm. The catalysed reaction is (6R)-5,10-methylene-5,6,7,8-tetrahydrofolate + glycine + H2O = (6S)-5,6,7,8-tetrahydrofolate + L-serine. The protein operates within one-carbon metabolism; tetrahydrofolate interconversion. Its pathway is amino-acid biosynthesis; glycine biosynthesis; glycine from L-serine: step 1/1. In terms of biological role, catalyzes the reversible interconversion of serine and glycine with tetrahydrofolate (THF) serving as the one-carbon carrier. This reaction serves as the major source of one-carbon groups required for the biosynthesis of purines, thymidylate, methionine, and other important biomolecules. Also exhibits THF-independent aldolase activity toward beta-hydroxyamino acids, producing glycine and aldehydes, via a retro-aldol mechanism. In Bacteroides fragilis (strain ATCC 25285 / DSM 2151 / CCUG 4856 / JCM 11019 / LMG 10263 / NCTC 9343 / Onslow / VPI 2553 / EN-2), this protein is Serine hydroxymethyltransferase.